The chain runs to 391 residues: Zinc finger protein 414 (391 aa).

The segment at 1-110 (MDEEPSGPSL…RRPPPGKQIP (110 aa)) is disordered. The segment covering 84-93 (GPTSTVSGTS) has biased composition (polar residues). 3 consecutive C2H2-type zinc fingers follow at residues 109 to 133 (IPCSSPGCCLSFPSVRDLAQHLRTH), 145 to 169 (FRCSALSCTETFPNMQELVAHGKLH), and 176 to 201 (FKCENCLLRIRTHRSLFKHLHVCAEH). 3 disordered regions span residues 201–243 (HAQS…LEPF), 274–312 (LAAAPGPPASSAAVWKKSQGAGGSPRRPQGGSDAPSGHA), and 344–391 (HLED…FSPL). Basic and acidic residues predominate over residues 214–226 (LDRESPASERPPE). Positions 227–236 (SDPAPAPGLP) are enriched in pro residues. The span at 274–286 (LAAAPGPPASSAA) shows a compositional bias: low complexity. A C2H2-type 4 zinc finger spans residues 326 to 348 (YSCMQCAFSTASRPAMTLHLEDH). Residues 353-372 (PAAPAPGQPRPDAPADPAPL) show a composition bias toward pro residues.

The protein belongs to the krueppel C2H2-type zinc-finger protein family.

It is found in the nucleus. May be involved in transcriptional regulation. This Bos taurus (Bovine) protein is Zinc finger protein 414 (ZNF414).